The following is a 156-amino-acid chain: Small ribosomal subunit protein uS7 (156 aa).

Belongs to the universal ribosomal protein uS7 family. Part of the 30S ribosomal subunit. Contacts proteins S9 and S11.

One of the primary rRNA binding proteins, it binds directly to 16S rRNA where it nucleates assembly of the head domain of the 30S subunit. Is located at the subunit interface close to the decoding center, probably blocks exit of the E-site tRNA. The protein is Small ribosomal subunit protein uS7 of Pseudoalteromonas translucida (strain TAC 125).